Reading from the N-terminus, the 456-residue chain is Riboflavin transporter RibZ (456 aa).

14 helical membrane passes run 5–25, 45–65, 78–98, 105–125, 134–154, 158–178, 192–212, 220–240, 260–280, 289–309, 321–341, 343–363, 385–405, and 428–448; these read WIVL…GSIL, WVVT…GKLG, FFIF…STLI, AVGA…AFPA, ITGA…GIIL, GWPS…FLGI, SFDI…LLAM, LYLG…EVKF, IIGV…PFYL, MMAG…APIA, ILTA…LLKA, SPLY…GAFS, FLAT…SSFF, and QSYW…VFFM.

Belongs to the major facilitator superfamily.

It localises to the cell membrane. In terms of biological role, transports riboflavin into the cell. The chain is Riboflavin transporter RibZ from Clostridioides difficile (strain 630) (Peptoclostridium difficile).